A 251-amino-acid chain; its full sequence is 5-oxoprolinase subunit A 3 (251 aa).

It belongs to the LamB/PxpA family. As to quaternary structure, forms a complex composed of PxpA, PxpB and PxpC.

The enzyme catalyses 5-oxo-L-proline + ATP + 2 H2O = L-glutamate + ADP + phosphate + H(+). In terms of biological role, catalyzes the cleavage of 5-oxoproline to form L-glutamate coupled to the hydrolysis of ATP to ADP and inorganic phosphate. In Pseudomonas aeruginosa (strain ATCC 15692 / DSM 22644 / CIP 104116 / JCM 14847 / LMG 12228 / 1C / PRS 101 / PAO1), this protein is 5-oxoprolinase subunit A 3.